Consider the following 44-residue polypeptide: MMKKEPERYIYDEQESQETTRLISEAYQSGYVDMPDQESSSPAE.

This is an uncharacterized protein from Bacillus subtilis (strain 168).